The sequence spans 113 residues: Large ribosomal subunit protein P2B (113 aa).

The tract at residues 66 to 113 (PSGGGAIDMGAPAAVAGGGAAPAEEAKKEEKVEEKEESDEDMGFSLFD) is disordered. Basic and acidic residues predominate over residues 89 to 99 (EEAKKEEKVEE).

It belongs to the eukaryotic ribosomal protein P1/P2 family. As to quaternary structure, P1 and P2 exist as dimers at the large ribosomal subunit. In terms of processing, phosphorylated.

Its function is as follows. Plays an important role in the elongation step of protein synthesis. This chain is Large ribosomal subunit protein P2B (RPP2B), found in Zea mays (Maize).